A 305-amino-acid polypeptide reads, in one-letter code: UPF0450 protein C17orf58 homolog (305 aa).

The N-terminal stretch at 1 to 22 is a signal peptide; it reads MTARALWLLCLIVGWSPEAPVA. Positions 18–160 are disordered; the sequence is EAPVAERKAP…DREPETQSCA (143 aa). Residues 21-39 show a composition bias toward basic and acidic residues; the sequence is VAERKAPPPHRKPDSRETP. Disulfide bonds link Cys159-Cys233, Cys163-Cys237, and Cys174-Cys304. Residues 159-304 form the NTR domain; the sequence is CARACSADAD…QVRGATHTQC (146 aa).

This sequence belongs to the UPF0450 family.

The polypeptide is UPF0450 protein C17orf58 homolog (Mus musculus (Mouse)).